We begin with the raw amino-acid sequence, 169 residues long: Protein pid-1 (169 aa).

The segment covering 137 to 151 has biased composition (polar residues); sequence SGSPRITPQKHTPVS. Residues 137-169 form a disordered region; the sequence is SGSPRITPQKHTPVSANHKPARSIFDDIPSNIA.

In terms of assembly, component of the pid-1 variant of the PETISCO complex (also called the pid-3, erh-2, tofu-6, and ife-3 small RNA complex) containing at least pid-1, tofu-6, ife-3, pid-3, and erh-2, which is required for the biogenesis of a class of 21 nucleotide PIWI-interacting RNAs (piRNAs) that possess a uracil residue at the 5'-end (also called 21U-RNAs). Within the complex interacts with pid-3; the interaction is direct. Within the complex interacts with erh-2. Within the complex interacts with tofu-6. As to expression, expressed predominantly in the germline (at protein level).

It is found in the cytoplasm. It localises to the nucleus. The protein resides in the perinuclear region. Component of the pid-1 variant of the PETISCO complex which is required for the biogenesis of a class of 21 nucleotide PIWI-interacting RNAs (piRNAs) that possess a uracil residue at the 5'-end (also called 21U-RNAs). Within the complex acts as an adapter which binds to the complex via erh-2. Involved in the biogenesis of 21U-RNAs which guide the piwi protein prg-1 to its DNA targets for silencing. Plays a role in small RNA-directed transgenerational epigenetic inheritance. The chain is Protein pid-1 from Caenorhabditis elegans.